Consider the following 498-residue polypeptide: Sugar transport protein 2 (498 aa).

Over 1–22 (MAVGSMNVEEGTKAFPAKLTGQ) the chain is Cytoplasmic. 12 helical membrane passes run 23–43 (VFLC…DIGI), 80–100 (LLQL…FISS), 117–137 (IFFL…MLIG), 140–160 (ILLG…ISEI), 167–187 (GGLN…ASYV), 200–220 (YSLG…FFIH), 288–308 (LQFF…PVLF), 320–340 (ISTV…LLVV), 348–368 (LLME…GILL), 381–401 (AVPL…AWSW), 421–441 (GYFC…QFFL), and 450–470 (LLFF…VFFL). Residues 471 to 498 (PETKGVPIEEMAEKRWKTHPRWKKYFKD) are Cytoplasmic-facing.

The protein belongs to the major facilitator superfamily. Sugar transporter (TC 2.A.1.1) family. Pollen specific (at protein level).

The protein resides in the membrane. Functionally, mediates an active uptake of hexoses, probably by sugar/hydrogen symport. Can transport glucose, 3-O-methylglucose, xylose, mannose, fructose and galactose. This Arabidopsis thaliana (Mouse-ear cress) protein is Sugar transport protein 2 (STP2).